The following is a 250-amino-acid chain: MKLSVLSLASLASAAALNAKVLTGKSLTRRADFCDQWGQVTTGNFILYNNLWGQGNADSGSQCTGLDSSSGNDSIAWHTSWSWSGGAGQVKSYANAAYVFTPKQLSALGSIPTSWSWKYTGSDIIANVAYDLFTSSTADGDNEYEIMIWLAALGGAGPISSTGSPVASPTVAGHSWDLYSGMNGQMQVYSFVASSQTESFSADLQEFIMYLQSNQGLPTSQYLVDVQAGTEPFSGSDATLTTSAYSVSVA.

A signal peptide spans 1–19 (MKLSVLSLASLASAAALNA). N-linked (GlcNAc...) asparagine glycosylation occurs at N72.

It belongs to the glycosyl hydrolase 12 (cellulase H) family.

Its subcellular location is the secreted. It catalyses the reaction xyloglucan + H2O = xyloglucan oligosaccharides.. Its function is as follows. Catalyzes endohydrolysis of 1,4-beta-D-glucosidic linkages in xyloglucan with retention of the beta-configuration of the glycosyl residues. Specific for xyloglucan and does not hydrolyze other cell wall components. The polypeptide is Probable xyloglucan-specific endo-beta-1,4-glucanase A (xgeA) (Aspergillus terreus (strain NIH 2624 / FGSC A1156)).